A 454-amino-acid polypeptide reads, in one-letter code: Caspase-9 (454 aa).

Residues 1–92 form the CARD domain; the sequence is MDEADRQLLR…GTLASLLQSG (92 aa). At T163 the chain carries Phosphothreonine; by MAPK1. Position 191 is a phosphotyrosine; by ABL1 (Y191). Active-site residues include H275 and C325. Residues S340 and S348 each carry the phosphoserine modification. Positions 354 to 367 are excised as a propeptide; sequence AVPYQEGPRPLDQL.

This sequence belongs to the peptidase C14A family. Heterotetramer that consists of two anti-parallel arranged heterodimers, each one formed by a 35 kDa (p35) and a 10 kDa (p10) subunit. Caspase-9 and APAF1 bind to each other via their respective NH2-terminal CED-3 homologous domains in the presence of cytochrome C and ATP. Interacts (inactive form) with EFHD2. Interacts with HAX1. Interacts with BIRC2/c-IAP1, XIAP/BIRC4, BIRC5/survivin, BIRC6/bruce and BIRC7/livin. Interacts with ABL1 (via SH3 domain); the interaction is direct and increased in the response of cells to genotoxic stress and ABL1/c-Abl activation. Interacts with BCL2L10. In terms of processing, cleavages at Asp-353 by granzyme B and at Asp-368 by caspase-3 generate the two active subunits. Caspase-8 and -10 can also be involved in these processing events. Phosphorylated at Thr-163 by MAPK1/ERK2. Phosphorylation at Thr-163 is sufficient to block caspase-9 processing and subsequent caspase-3 activation. Phosphorylation on Tyr-191 by ABL1/c-Abl; occurs in the response of cells to DNA damage. Post-translationally, ubiquitinated by BIRC6; this activity is inhibited by DIABLO/SMAC.

It catalyses the reaction Strict requirement for an Asp residue at position P1 and with a marked preference for His at position P2. It has a preferred cleavage sequence of Leu-Gly-His-Asp-|-Xaa.. Inhibited by BIRC6; following inhibition of BIRC6-caspase binding by DIABLO/SMAC, BIRC6 is subjected to caspase cleavage, leading to an increase in active caspases. Involved in the activation cascade of caspases responsible for apoptosis execution. Binding of caspase-9 to Apaf-1 leads to activation of the protease which then cleaves and activates effector caspases caspase-3 (CASP3) or caspase-7 (CASP7). Promotes DNA damage-induced apoptosis in a ABL1/c-Abl-dependent manner. Proteolytically cleaves poly(ADP-ribose) polymerase (PARP). Cleaves BIRC6 following inhibition of BIRC6-caspase binding by DIABLO/SMAC. In Mus musculus (Mouse), this protein is Caspase-9 (Casp9).